The sequence spans 197 residues: Dephospho-CoA kinase (197 aa).

In terms of domain architecture, DPCK spans 2-197; that stretch reads IIGITGGIAS…SALLLLANPR (196 aa). ATP is bound at residue 10 to 15; it reads ASGKST.

This sequence belongs to the CoaE family.

The protein resides in the cytoplasm. The enzyme catalyses 3'-dephospho-CoA + ATP = ADP + CoA + H(+). Its pathway is cofactor biosynthesis; coenzyme A biosynthesis; CoA from (R)-pantothenate: step 5/5. Its function is as follows. Catalyzes the phosphorylation of the 3'-hydroxyl group of dephosphocoenzyme A to form coenzyme A. This chain is Dephospho-CoA kinase, found in Streptococcus pyogenes serotype M1.